Consider the following 491-residue polypeptide: Bifunctional protein HldE (491 aa).

A ribokinase region spans residues 1–330 (MDRKMVESLF…AAVSLEHRDS (330 aa)). ATP is bound at residue 205–208 (NRKE). The active site involves D275. Residues 356 to 491 (FTNGCFDLLH…KVLERYTDEQ (136 aa)) are cytidylyltransferase.

This sequence in the N-terminal section; belongs to the carbohydrate kinase PfkB family. In the C-terminal section; belongs to the cytidylyltransferase family. Homodimer.

It catalyses the reaction D-glycero-beta-D-manno-heptose 7-phosphate + ATP = D-glycero-beta-D-manno-heptose 1,7-bisphosphate + ADP + H(+). The catalysed reaction is D-glycero-beta-D-manno-heptose 1-phosphate + ATP + H(+) = ADP-D-glycero-beta-D-manno-heptose + diphosphate. The protein operates within nucleotide-sugar biosynthesis; ADP-L-glycero-beta-D-manno-heptose biosynthesis; ADP-L-glycero-beta-D-manno-heptose from D-glycero-beta-D-manno-heptose 7-phosphate: step 1/4. It functions in the pathway nucleotide-sugar biosynthesis; ADP-L-glycero-beta-D-manno-heptose biosynthesis; ADP-L-glycero-beta-D-manno-heptose from D-glycero-beta-D-manno-heptose 7-phosphate: step 3/4. Functionally, catalyzes the phosphorylation of D-glycero-D-manno-heptose 7-phosphate at the C-1 position to selectively form D-glycero-beta-D-manno-heptose-1,7-bisphosphate. In terms of biological role, catalyzes the ADP transfer from ATP to D-glycero-beta-D-manno-heptose 1-phosphate, yielding ADP-D-glycero-beta-D-manno-heptose. The protein is Bifunctional protein HldE of Trichlorobacter lovleyi (strain ATCC BAA-1151 / DSM 17278 / SZ) (Geobacter lovleyi).